The chain runs to 207 residues: Superoxide dismutase [Mn] (207 aa).

Residues H28, H76, D160, and H164 each contribute to the Mn(2+) site.

This sequence belongs to the iron/manganese superoxide dismutase family. It depends on Mn(2+) as a cofactor.

It carries out the reaction 2 superoxide + 2 H(+) = H2O2 + O2. Destroys superoxide anion radicals which are normally produced within the cells and which are toxic to biological systems. The sequence is that of Superoxide dismutase [Mn] (sodA) from Mycobacterium lepraemurium.